Consider the following 305-residue polypeptide: Taste receptor type 2 member 136 (305 aa).

Residues 1–9 lie on the Extracellular side of the membrane; the sequence is MMSFLVSIA. The helical transmembrane segment at 10–30 threads the bilayer; that stretch reads SIAMLVKIVLGTFANVFIVLV. The Cytoplasmic portion of the chain corresponds to 31–46; the sequence is NFTDCIKKRKFLLADR. A helical transmembrane segment spans residues 47–67; the sequence is ILTVLAIFRFDLLWIILMNWS. Over 68-69 the chain is Extracellular; it reads SS. The chain crosses the membrane as a helical span at residues 70-90; sequence VFHVGLYFQVRFCICVVWIVT. Residues 91 to 99 lie on the Cytoplasmic side of the membrane; the sequence is NHFNTWLAN. The chain crosses the membrane as a helical span at residues 100 to 120; that stretch reads ILSILYLLKIDNFSNLIFLGL. Topologically, residues 121 to 127 are extracellular; it reads KGKIKCP. Residues 128-148 form a helical membrane-spanning segment; sequence YIVLLPCFVLLFPNLIMVTIC. Residues 149 to 176 lie on the Cytoplasmic side of the membrane; it reads ETTQANGHQGNLTGKTKLTYFTNLIAMT. A helical transmembrane segment spans residues 177–197; it reads FTLGSLVPFTTFMICFLLLIC. Residues 198–223 are Extracellular-facing; it reads SLCKHLRTMRLYGKGSQGPSASTHIK. The chain crosses the membrane as a helical span at residues 224–244; it reads VLQVLISFLLLFSMFILLLII. At 245 to 305 the chain is on the cytoplasmic side; sequence SDYNYTKSLE…ARFWLKEKKP (61 aa).

The protein belongs to the G-protein coupled receptor T2R family.

Its subcellular location is the membrane. Its function is as follows. Putative taste receptor which may play a role in the perception of bitterness. This is Taste receptor type 2 member 136 (Tas2r136) from Mus musculus (Mouse).